The chain runs to 206 residues: U-scoloptoxin(08)-Cw1a (206 aa).

Residues 1 to 24 form the signal peptide; it reads MIFRVNLLFSCFCFVLFVFDFSNA. A propeptide spanning residues 25–164 is cleaved from the precursor; that stretch reads SKYDQGSLNI…DLPELKRRKR (140 aa). One copy of the RLWRNWE 1; approximate repeat lies at 37 to 43; it reads RLWRDWE. The stretch at 71–77 is one RLWRNWE 2; approximate repeat; the sequence is RLWRDWE. The RLWRNWE 3; approximate repeat unit spans residues 104 to 110; the sequence is RLWRDWE. An RLWRNWE 4 repeat occupies 137-143; it reads RLWRNWE. An RLWRNWE 5; approximate repeat occupies 164 to 170; that stretch reads RLWRNED.

The protein belongs to the scoloptoxin-08 family. Contains 3 disulfide bonds. Expressed by the venom gland.

It localises to the secreted. In Cormocephalus westwoodi (Westwood's green centipede), this protein is U-scoloptoxin(08)-Cw1a.